The following is a 329-amino-acid chain: Isopentenyl-diphosphate delta-isomerase (329 aa).

Arg-4–Lys-5 contacts substrate. Residues Ala-59–Thr-61, Ser-89, and Asn-116 contribute to the FMN site. Gln-146 is a binding site for substrate. Residue Glu-147 participates in Mg(2+) binding. Residues Lys-178, Ser-203, Thr-208, Gly-252–Arg-254, and Ser-273–Arg-274 contribute to the FMN site.

Belongs to the IPP isomerase type 2 family. In terms of assembly, homooctamer. Dimer of tetramers. The cofactor is FMN. It depends on NADPH as a cofactor. Requires Mg(2+) as cofactor.

It is found in the cytoplasm. The enzyme catalyses isopentenyl diphosphate = dimethylallyl diphosphate. In terms of biological role, involved in the biosynthesis of isoprenoids. Catalyzes the 1,3-allylic rearrangement of the homoallylic substrate isopentenyl (IPP) to its allylic isomer, dimethylallyl diphosphate (DMAPP). The protein is Isopentenyl-diphosphate delta-isomerase of Streptococcus pyogenes serotype M28 (strain MGAS6180).